Here is a 205-residue protein sequence, read N- to C-terminus: Probable GTP-binding protein EngB (205 aa).

Residues 8–195 (RDAEVVLIGR…NEAVRHHLHE (188 aa)) enclose the EngB-type G domain. Residues 16–23 (GRSNVGKS), 41–45 (GVTRS), 60–63 (DLPG), 140–143 (NKMD), and 175–177 (ISA) contribute to the GTP site. Ser-23 and Thr-43 together coordinate Mg(2+).

Belongs to the TRAFAC class TrmE-Era-EngA-EngB-Septin-like GTPase superfamily. EngB GTPase family. Mg(2+) is required as a cofactor.

In terms of biological role, necessary for normal cell division and for the maintenance of normal septation. This is Probable GTP-binding protein EngB from Haloarcula marismortui (strain ATCC 43049 / DSM 3752 / JCM 8966 / VKM B-1809) (Halobacterium marismortui).